Here is a 286-residue protein sequence, read N- to C-terminus: KH domain-containing protein At2g38610 (286 aa).

An N-acetylserine modification is found at serine 2. Positions 141–208 (EIPVDNYPNF…EHLNEQLHIL (68 aa)) constitute a KH domain. The interval 256–286 (SNNLREESPGPSGGGSVSPFNSSGKRPKTGC) is disordered. Phosphoserine is present on residues serine 263 and serine 273.

Its subcellular location is the nucleus. In Arabidopsis thaliana (Mouse-ear cress), this protein is KH domain-containing protein At2g38610.